The sequence spans 364 residues: Arabinose metabolism transcriptional repressor (364 aa).

Positions 6–74 constitute an HTH gntR-type domain; it reads LPKYLQLKQE…QGSGTFVSRP (69 aa). Positions 34-53 form a DNA-binding region, H-T-H motif; that stretch reads EHEIANQFQLSRHTVRQALG.

The protein resides in the cytoplasm. In terms of biological role, transcriptional repressor of the arabinose utilization genes. This Geobacillus stearothermophilus (Bacillus stearothermophilus) protein is Arabinose metabolism transcriptional repressor (araR).